The following is a 987-amino-acid chain: Ephrin type-B receptor 4a (987 aa).

Positions 1 to 24 (MELFSRNVAAFWIILLEFLLGSVA) are cleaved as a signal peptide. At 25-548 (EEEVLMNTKT…DSSSPLLVTG (524 aa)) the chain is on the extracellular side. Positions 26 to 205 (EEVLMNTKTE…FFKKCPALTR (180 aa)) constitute an Eph LBD domain. Cystine bridges form between Cys70-Cys187 and Cys104-Cys114. The interval 319–340 (DSADTPCTRPPSSPRSPVPQVN) is disordered. Positions 326 to 335 (TRPPSSPRSP) are enriched in pro residues. Fibronectin type-III domains follow at residues 328-438 (PPSS…TSPN) and 442-536 (LVSG…TLPD). The helical transmembrane segment at 549-569 (ILIAMGMLLLIIVIGAAIYCI) threads the bilayer. The Cytoplasmic segment spans residues 570–987 (RKQNNYKDPE…QNKAPGNVLY (418 aa)). One can recognise a Protein kinase domain in the interval 621–884 (VKIEEVIGAG…NIVSALDKLI (264 aa)). ATP is bound by residues 627–635 (IGAGEFGEV) and Lys653. The active-site Proton acceptor is Asp746. The SAM domain maps to 914–978 (SSCGTVGDWL…LSSIEALGIQ (65 aa)).

This sequence belongs to the protein kinase superfamily. Tyr protein kinase family. Ephrin receptor subfamily.

The protein resides in the cell membrane. The catalysed reaction is L-tyrosyl-[protein] + ATP = O-phospho-L-tyrosyl-[protein] + ADP + H(+). Receptor tyrosine kinase which binds promiscuously transmembrane ephrin-B family ligands residing on adjacent cells, leading to contact-dependent bidirectional signaling into neighboring cells. The signaling pathway downstream of the receptor is referred to as forward signaling while the signaling pathway downstream of the ephrin ligand is referred to as reverse signaling. Together with its cognate ligand/functional ligand EFNB2 is involved in the regulation of cell adhesion and cell migration, and plays a central role in heart morphogenesis, angiogenesis and blood vessel remodeling and permeability. EPHB4-mediated forward signaling controls cellular repulsion and segregation from EFNB2-expressing cells. Involved in somitogenesis. The protein is Ephrin type-B receptor 4a of Danio rerio (Zebrafish).